The primary structure comprises 371 residues: Trans-enoyl reductase mycC (371 aa).

Position 51–54 (51–54) interacts with NADP(+); that stretch reads CDWK. Substrate is bound at residue 140-147; that stretch reads CVVGTVGL. NADP(+)-binding positions include 182–185, 205–208, Tyr223, and 270–271; these read STAS, SPAN, and FE. A substrate-binding site is contributed by 291–295; it reads GIRLL. NADP(+) is bound at residue 361-362; the sequence is VS.

Belongs to the zinc-containing alcohol dehydrogenase family. In terms of assembly, monomer.

The catalysed reaction is L-leucine + 8 malonyl-CoA + 4 S-adenosyl-L-methionine + ATP + 9 NADPH + 12 H(+) = (5S)-5-(2-methylpropyl)-3-[(2E,6R,8E,10E,12E)-6,8,10,12-tetramethyltetradeca-2,8,10,12-tetraenoyl]-2,5-dihydro-1H-pyrrol-2-one + AMP + 4 S-adenosyl-L-homocysteine + 8 CO2 + diphosphate + 9 NADP(+) + 8 CoA + 7 H2O. It participates in mycotoxin biosynthesis. Functionally, trans-enoyl reductase; part of the gene cluster that mediates the biosynthesis of myceliothermophins, mycotoxins that contain a trans-fused decalin ring system connected to a conjugated 3-pyrrolin-2-one moiety and that have potential anti-tumor properties. The polyketide synthase module (PKS) of the PKS-NRPS mycA is responsible for the synthesis of the octaketide backbone. The downstream nonribosomal peptide synthetase (NRPS) module then amidates the carboxyl end of the octaketide with a leucine. A reductase-like domain (R) at the C-terminus catalyzes the reductive release of the polyketide-amino acid intermediate. Because mycA lacks a designated enoylreductase (ER) domain, the required activity is provided the enoyl reductase mycC. Following mycA-catalyzed construction and release of aminoacyl polyketide aldehyde, Knoevenagel condensation yields the expected ketone. This C18 keto acyclic precursor is the substrate of the Diels-Alderase mycB, that catalyzes the Diels-Alder cycloaddition to produce myceliothermophin E. A yet unknown oxygenase involved in the production of myceliothermophin A, via substitution with a hydroxyl group at the C21, has still to be identified. The protein is Trans-enoyl reductase mycC of Thermothelomyces thermophilus (strain ATCC 42464 / BCRC 31852 / DSM 1799) (Sporotrichum thermophile).